Consider the following 544-residue polypeptide: Chaperonin GroEL (544 aa).

ATP contacts are provided by residues 30–33, Lys51, 87–91, Gly415, and Asp495; these read TLGP and DGTTT.

It belongs to the chaperonin (HSP60) family. As to quaternary structure, forms a cylinder of 14 subunits composed of two heptameric rings stacked back-to-back. Interacts with the co-chaperonin GroES.

The protein localises to the cytoplasm. It catalyses the reaction ATP + H2O + a folded polypeptide = ADP + phosphate + an unfolded polypeptide.. Its function is as follows. Together with its co-chaperonin GroES, plays an essential role in assisting protein folding. The GroEL-GroES system forms a nano-cage that allows encapsulation of the non-native substrate proteins and provides a physical environment optimized to promote and accelerate protein folding. In Bartonella bacilliformis (strain ATCC 35685 / KC583 / Herrer 020/F12,63), this protein is Chaperonin GroEL.